We begin with the raw amino-acid sequence, 157 residues long: 2-C-methyl-D-erythritol 2,4-cyclodiphosphate synthase (157 aa).

Asp-8 and His-10 together coordinate a divalent metal cation. Residues 8 to 10 (DVH) and 34 to 35 (HS) contribute to the 4-CDP-2-C-methyl-D-erythritol 2-phosphate site. An a divalent metal cation-binding site is contributed by His-42. 4-CDP-2-C-methyl-D-erythritol 2-phosphate is bound by residues 56–58 (DIG), 132–135 (TTNE), and Arg-142.

Belongs to the IspF family. Homotrimer. A divalent metal cation is required as a cofactor.

The enzyme catalyses 4-CDP-2-C-methyl-D-erythritol 2-phosphate = 2-C-methyl-D-erythritol 2,4-cyclic diphosphate + CMP. The protein operates within isoprenoid biosynthesis; isopentenyl diphosphate biosynthesis via DXP pathway; isopentenyl diphosphate from 1-deoxy-D-xylulose 5-phosphate: step 4/6. Functionally, involved in the biosynthesis of isopentenyl diphosphate (IPP) and dimethylallyl diphosphate (DMAPP), two major building blocks of isoprenoid compounds. Catalyzes the conversion of 4-diphosphocytidyl-2-C-methyl-D-erythritol 2-phosphate (CDP-ME2P) to 2-C-methyl-D-erythritol 2,4-cyclodiphosphate (ME-CPP) with a corresponding release of cytidine 5-monophosphate (CMP). This is 2-C-methyl-D-erythritol 2,4-cyclodiphosphate synthase from Pelodictyon phaeoclathratiforme (strain DSM 5477 / BU-1).